A 157-amino-acid polypeptide reads, in one-letter code: Protein Smg homolog (157 aa).

Belongs to the Smg family.

The polypeptide is Protein Smg homolog (Alkalilimnicola ehrlichii (strain ATCC BAA-1101 / DSM 17681 / MLHE-1)).